A 96-amino-acid polypeptide reads, in one-letter code: Co-chaperonin GroES (96 aa).

The protein belongs to the GroES chaperonin family. As to quaternary structure, heptamer of 7 subunits arranged in a ring. Interacts with the chaperonin GroEL.

Its subcellular location is the cytoplasm. Functionally, together with the chaperonin GroEL, plays an essential role in assisting protein folding. The GroEL-GroES system forms a nano-cage that allows encapsulation of the non-native substrate proteins and provides a physical environment optimized to promote and accelerate protein folding. GroES binds to the apical surface of the GroEL ring, thereby capping the opening of the GroEL channel. The sequence is that of Co-chaperonin GroES from Shewanella halifaxensis (strain HAW-EB4).